The chain runs to 555 residues: Probable Xaa-Pro aminopeptidase BC1G_13431 (555 aa).

D303, D314, E458, and E499 together coordinate Mn(2+). Positions 527–555 are disordered; sequence EGKEQEEEEEREANRKATESRKQKKTWFW. A compositionally biased stretch (basic and acidic residues) spans 538 to 547; sequence EANRKATESR.

This sequence belongs to the peptidase M24B family. Requires Mn(2+) as cofactor.

The catalysed reaction is Release of any N-terminal amino acid, including proline, that is linked to proline, even from a dipeptide or tripeptide.. Its function is as follows. Catalyzes the removal of a penultimate prolyl residue from the N-termini of peptides. This chain is Probable Xaa-Pro aminopeptidase BC1G_13431, found in Botryotinia fuckeliana (strain B05.10) (Noble rot fungus).